Consider the following 685-residue polypeptide: Galactocerebrosidase (685 aa).

An N-terminal signal peptide occupies residues 1 to 42 (MAEWLLSASRQRRVKAMTAAAGSAGRAAVPFLLCALLAPGGA). T109 is a substrate binding site. N-linked (GlcNAc...) asparagine glycosylation occurs at N143. Residues W151 and N197 each contribute to the substrate site. E198 acts as the Proton donor/acceptor in catalysis. Catalysis depends on E274, which acts as the Nucleophile. A disulfide bridge links C287 with C394. N379 carries an N-linked (GlcNAc...) asparagine glycan. R396 lines the substrate pocket. 5 N-linked (GlcNAc...) asparagine glycosylation sites follow: N403, N451, N556, N559, and N602.

It belongs to the glycosyl hydrolase 59 family.

It localises to the lysosome. It catalyses the reaction a beta-D-galactosyl-(1&lt;-&gt;1')-N-acylsphing-4-enine + H2O = an N-acylsphing-4-enine + D-galactose. The catalysed reaction is beta-D-galactosyl-(1&lt;-&gt;1)-sphing-4-enine + H2O = sphing-4-enine + D-galactose. It carries out the reaction a D-galactosylceramide + H2O = an N-acyl-sphingoid base + D-galactose. Functionally, hydrolyzes the galactose ester bonds of glycolipids such as galactosylceramide and galactosylsphingosine. Enzyme with very low activity responsible for the lysosomal catabolism of galactosylceramide, a major lipid in myelin, kidney and epithelial cells of small intestine and colon. In Macaca mulatta (Rhesus macaque), this protein is Galactocerebrosidase.